Reading from the N-terminus, the 371-residue chain is MSEPFMNAPWQPPGDHPALKSPQPTGILIDSVRKLYPARKASAEVVALDDISLNVPKGSILGVIGRSGAGKSTLIRLINGLDKPTAGRVVVNDVEITSLDEPALRRARRSIGMVFQHFNLLSSRTAFANVALPLEIAGTPKAEIEKRVLPLLDMVGLADKRDRYPAELSGGQKQRVGIARALATEPAVLLSDEATSALDPETTDQILDLLKQINRDLHLTILFITHEMAVVKALADRVAVIEAGRIVEEGATFDVFATPRHEVTRRFVSSVTGSGAPDWLLAQLQPLQPPGGKAVLRVTFKGSDASQPLLSRVARTLGVDLNILFGQVEMIAGHPFGTLIVSLDASPDVLRQVIAQLSAGNNLVEQLGYVA.

Positions 1–22 are disordered; that stretch reads MSEPFMNAPWQPPGDHPALKSP. The region spanning 27–268 is the ABC transporter domain; that stretch reads ILIDSVRKLY…PRHEVTRRFV (242 aa). Position 65–72 (65–72) interacts with ATP; it reads GRSGAGKS.

It belongs to the ABC transporter superfamily. Methionine importer (TC 3.A.1.24) family. The complex is composed of two ATP-binding proteins (MetN), two transmembrane proteins (MetI) and a solute-binding protein (MetQ).

The protein localises to the cell inner membrane. The catalysed reaction is L-methionine(out) + ATP + H2O = L-methionine(in) + ADP + phosphate + H(+). It catalyses the reaction D-methionine(out) + ATP + H2O = D-methionine(in) + ADP + phosphate + H(+). Its function is as follows. Part of the ABC transporter complex MetNIQ involved in methionine import. Responsible for energy coupling to the transport system. The sequence is that of Methionine import ATP-binding protein MetN from Rhodopseudomonas palustris (strain BisB5).